A 3898-amino-acid polypeptide reads, in one-letter code: Genome polyprotein (3898 aa).

The 168-residue stretch at Met-1–Cys-168 folds into the Peptidase C53 domain. Catalysis depends on for N-terminal protease activity residues Glu-22, His-49, and Cys-69. A zinc-binding TRASH domain region spans residues Cys-112–Cys-138. An N-linked (GlcNAc...) asparagine; by host glycan is attached at Asn-157. A disordered region spans residues Lys-221–Glu-242. N-linked (GlcNAc...) asparagine; by host glycans are attached at residues Asn-269, Asn-278, and Asn-332. Intrachain disulfides connect Cys-305/Cys-349 and Cys-335/Cys-336. 2 N-linked (GlcNAc...) asparagine; by host glycosylation sites follow: Asn-362 and Asn-367. 2 disulfide bridges follow: Cys-377-Cys-422 and Cys-381-Cys-405. N-linked (GlcNAc...) asparagine; by host glycans are attached at residues Asn-410, Asn-425, Asn-500, and Asn-594. A disulfide bridge connects residues Cys-693 and Cys-737. Residues Asn-805, Asn-810, Asn-874, Asn-918, and Asn-949 are each glycosylated (N-linked (GlcNAc...) asparagine; by host). A run of 9 helical transmembrane segments spans residues Phe-1031–Thr-1051, Val-1070–Leu-1090, Ile-1104–Leu-1124, Gln-1140–Ala-1164, Leu-1189–Ser-1209, Leu-1217–Val-1237, Leu-1247–Thr-1267, Val-1281–Leu-1301, and Thr-1360–Ile-1380. Residues Lys-1441–Arg-1589 form the Peptidase C74 domain. Catalysis depends on for cysteine protease NS2 activity residues His-1447, Glu-1461, and Cys-1512. The helical transmembrane segment at Met-1568–Leu-1588 threads the bilayer. A Peptidase S31 domain is found at Gly-1590–Arg-1763. Residues His-1658 and Asp-1695 each act as charge relay system; for serine protease NS3 activity in the active site. Asn-1713 carries an N-linked (GlcNAc...) asparagine; by host glycan. Ser-1752 functions as the Charge relay system; for serine protease NS3 activity in the catalytic mechanism. Residues Ile-1802–Ala-1960 form the Helicase ATP-binding domain. Leu-1815–Thr-1822 is an ATP binding site. The DEAH box signature appears at Asp-1910–His-1913. The Helicase C-terminal domain occupies Gly-1978–Met-2179. Asn-2134, Asn-2217, Asn-2419, Asn-2494, Asn-2787, Asn-2815, and Asn-2891 each carry an N-linked (GlcNAc...) asparagine; by host glycan. Positions Pro-2968 to Thr-2980 are enriched in low complexity. Residues Pro-2968–Lys-2987 are disordered. Asn-3103, Asn-3211, and Asn-3316 each carry an N-linked (GlcNAc...) asparagine; by host glycan. GTP is bound by residues Thr-3500 and Leu-3502. The RdRp catalytic domain occupies Pro-3519 to Phe-3642. Residue Asn-3689 is glycosylated (N-linked (GlcNAc...) asparagine; by host). Position 3697 (Arg-3697) interacts with GTP. N-linked (GlcNAc...) asparagine; by host glycosylation is present at Asn-3698. Position 3705 (Lys-3705) interacts with GTP. Asn-3794 carries an N-linked (GlcNAc...) asparagine; by host glycan.

It belongs to the pestivirus polyprotein family. In terms of assembly, interacts (via N-terminus) with host SP1; this interaction induces proteasomal degradation of SP1 with subsequent down-regulation of HDAC1 and ISG15 expression thereby counteracting the host innate immunity. Interacts (via C-terminus) with host IRF3. Interacts with host OS9. As to quaternary structure, homodimer; disulfide-linked. Interacts with host RPSA. In terms of assembly, homodimer; disulfide-linked. Heterodimer with E1; disulfide-linked. Homodimer; disulfide-linked. Heterodimer with E1; disulfide-linked. Interacts with host TRX2. Interacts with host receptor ADAM17 (via metalloproteinase domain); this interaction allows binding and probably entry of the virus into the host cell. Interacts with host ANXA2; this interaction allows binding and probably entry of the virus into the host cell. Interacts with host MERTK; this interaction allows binding and probably entry of the virus into the host cell. As to quaternary structure, interacts with host TRAF6; this interaction inhibits host NF-kappa-B pathway. Interacts with NS5B; this interaction enhances RNA-dependent RNA polymerase activity. Interacts with protein NS4A. In terms of assembly, interacts with host RAB5, this interaction facilitates the formation of NS4B-related complex. Interacts with host FTH1; this interaction plays a positive role in viral anti-apoptosis. Interacts with RNA-directed RNA polymerase. Interacts with host RSAD2; this interaction inhibits viral replication. As to quaternary structure, interacts with NS5A; this interaction promotes viral replication. Post-translationally, heavily glycosylated. The viral RNA of pestiviruses is expressed as a single polyprotein which undergoes post-translational proteolytic processing resulting in the production of at least eleven individual proteins. The N-terminal protease cleaves itself from the nascent polyprotein autocatalytically and thereby generates the N-terminus of the adjacent viral capsid protein C. In terms of processing, cleavage between E2 and p7 is partial.

The protein localises to the virion. It is found in the host membrane. It localises to the virion membrane. Its subcellular location is the host cell surface. The protein resides in the host cytoplasm. It catalyses the reaction Leu is conserved at position P1 for all four cleavage sites. Alanine is found at position P1' of the NS4A-NS4B cleavage site, whereas serine is found at position P1' of the NS3-NS4A, NS4B-NS5A and NS5A-NS5B cleavage sites.. The enzyme catalyses RNA(n) + a ribonucleoside 5'-triphosphate = RNA(n+1) + diphosphate. It carries out the reaction a ribonucleoside 5'-triphosphate + H2O = a ribonucleoside 5'-diphosphate + phosphate + H(+). The catalysed reaction is ATP + H2O = ADP + phosphate + H(+). Leader cysteine autoprotease that cleaves itself from the nascent polyprotein during translation of the viral mRNA. Once released, plays a role in the inhibition of host innate immune response by interacting with host IRF3 and inducing its proteasomal degradation. In terms of biological role, packages viral RNA to form a viral nucleocapsid and thereby protects viral RNA. Also plays a role in transcription regulation. Protects the incoming virus against IFN-induced effectors. Functionally, plays a role in viral entry. Interacts with host RPSA that acts as a cellular attachment receptor for the virus. Also possesses intrinsic ribonuclease (RNase) activity that can inhibit the production of type I interferon and assist in the development of persistent infections. Cleaves preferentially NpU bonds. Binds to heparan sulfate on the host cells for entry. Its function is as follows. Plays a role in cell attachment and subsequent fusion of viral and cellular membranes. Therefore, mediates together with envelope glycoprotein E2 the viral entry. Plays a role in cell attachment and subsequent fusion of viral and cellular membranes. Therefore, mediates together with envelope glycoprotein E1 the viral entry. Binds to host ADAM17 receptor for entry. Binds to host ANXA2 for entry. Binds to host MERTK for entry. In terms of biological role, plays an essential role in the virus replication cycle by acting as a viroporin. Forms ion conductive pores, which alters the cell permeability allowing the transport of ions and other small molecules. Functionally, autoprotease that associates with the host chaperone JIV and cleaves the NS2-3 protein between NS2 and NS3. Also plays a role in the formation of infectious particles. Its function is as follows. Plays a role in the regulation of viral RNA replication. Multifunctional protein that contains an N-terminal protease and a C-terminal helicase, playing essential roles in viral polyprotein processing and viral genome replication. The chymotrypsin-like serine protease activity utilizes NS4A as an essential cofactor and catalyzes the cleavage of the polyprotein leading to the release of NS4A, NS4B, NS5A, and NS5B. Plays a role in the inhibition of host NF-kappa-B activation by interacting with and inhibiting host TRAF6. Interacts with NS5B to enhance RNA-dependent RNA polymerase activity. In terms of biological role, acts as a cofactor for the NS3 protease activity. Functionally, induces a specific membrane alteration that serves as a scaffold for the virus replication complex. Antagonizes host cell apoptosis by interacting with host ferritin heavy chain. The ORF4 protein physically binds host FTH1/FHC, resulting in the reduction of FTH1 protein levels in host cells. Reduction of FTH1 concentration further inhibits the accumulation of reactive oxygen in host cells, leading to reduced apoptosis. Its function is as follows. Regulates viral RNA replication by interacting with the 3'-untranslated region of viral RNA in a dose-dependent manner. At small concentrations promotes viral synthesis by interacting with the polymerase NS5B while at large concentrations, inhibits replication. Replicates the viral (+) and (-) genome. This is Genome polyprotein from Sus scrofa (Pig).